A 444-amino-acid chain; its full sequence is ATP-dependent protease ATPase subunit HslU (444 aa).

ATP contacts are provided by residues Ile-20 and 62-67 (GVGKTE). The segment at 130–158 (EDRILDALVPPPRGASGEPERGEDNSARQ) is disordered. ATP contacts are provided by Asp-257, Glu-322, and Arg-394.

It belongs to the ClpX chaperone family. HslU subfamily. A double ring-shaped homohexamer of HslV is capped on each side by a ring-shaped HslU homohexamer. The assembly of the HslU/HslV complex is dependent on binding of ATP.

It is found in the cytoplasm. Its function is as follows. ATPase subunit of a proteasome-like degradation complex; this subunit has chaperone activity. The binding of ATP and its subsequent hydrolysis by HslU are essential for unfolding of protein substrates subsequently hydrolyzed by HslV. HslU recognizes the N-terminal part of its protein substrates and unfolds these before they are guided to HslV for hydrolysis. In Bordetella pertussis (strain Tohama I / ATCC BAA-589 / NCTC 13251), this protein is ATP-dependent protease ATPase subunit HslU.